Consider the following 354-residue polypeptide: MSKVKSITRESWILSTFPEWGSWLNEEIEQEQVAPGTFAMWWLGCTGIWLKSEGGTNVCVDFWCGTGKQSHGNPLMKQGHQMQRMAGVKKLQPNLRTTPFVLDPFAIRQIDAVLATHDHNDHIDVNVAAAVMQNCADDVPFIGPKTCVDLWIGWGVPKERCIVVKPGDVVKVKDIEIHALDAFDRTALITLPADQKAAGVLPDGMDDRAVNYLFKTPGGSLYHSGDSHYSNYYAKHGNEHQIDVALGSYGENPRGITDKMTSADMLRMGEALNAKVVIPFHHDIWSNFQAAPQEIRVLWEMKKDRLKYGFKPFIWQVGGKFTWPLDKDNLEYHYPRGFDDCFTIEPDLPFKSFL.

The protein belongs to the UlaG family. Requires a divalent metal cation as cofactor.

The protein localises to the cytoplasm. The enzyme catalyses L-ascorbate 6-phosphate + H2O = 3-dehydro-L-gulonate 6-phosphate. It functions in the pathway cofactor degradation; L-ascorbate degradation; D-xylulose 5-phosphate from L-ascorbate: step 1/4. In terms of biological role, probably catalyzes the hydrolysis of L-ascorbate-6-P into 3-keto-L-gulonate-6-P. Is essential for L-ascorbate utilization under anaerobic conditions. The polypeptide is Probable L-ascorbate-6-phosphate lactonase UlaG (Shigella boydii serotype 18 (strain CDC 3083-94 / BS512)).